A 429-amino-acid chain; its full sequence is Phosphoribosylamine--glycine ligase (429 aa).

The ATP-grasp domain occupies 109-316 (KDFLARHKIP…LVELCLKACD (208 aa)). An ATP-binding site is contributed by 135-196 (LREKGTPIVV…EEFLDGEEAS (62 aa)). Residues E286 and N288 each contribute to the Mg(2+) site.

It belongs to the GARS family. Requires Mg(2+) as cofactor. Mn(2+) is required as a cofactor.

The catalysed reaction is 5-phospho-beta-D-ribosylamine + glycine + ATP = N(1)-(5-phospho-beta-D-ribosyl)glycinamide + ADP + phosphate + H(+). The protein operates within purine metabolism; IMP biosynthesis via de novo pathway; N(1)-(5-phospho-D-ribosyl)glycinamide from 5-phospho-alpha-D-ribose 1-diphosphate: step 2/2. In Haemophilus influenzae (strain ATCC 51907 / DSM 11121 / KW20 / Rd), this protein is Phosphoribosylamine--glycine ligase.